The chain runs to 425 residues: MTSNTTEIPYHFLPYVRIQYDWQLAYKQDSDNCWVAYQKDLKNTIHGSVHSTKIDENNFKFESDYGFKLTPNKENKNNIRVENDKYSIEIYAPEKQLKVSGGKKRITSMGVSHLGELGVYGSTDGTLEVFETGDGQIRRKLDGHVGDVDLAMFFPSGRVILSGSSDSRLKIWDAIEGTCASTLVGHIGGITSASLVDRGRNLVSCSRDGTSKLWDIPTSSIISNLTKLSRPINDSFIASSLLDSIPTTTTTNSNDNNKVDEREVGTDGKTLIIAAEEGFLQAIDLRSKNMISQMNVVQSGEKSTRSVAFNACHVHKNYIIGGDHNGSIYFWDKRNLNSPFCRLQFTNSPIHHIKANSSNSKIANSIWVTSGDGCCFLLDLDKNQIITSLSGIDTDVVTSFNIVGNQAYLTSRDSIIRCYNNLLNI.

WD repeat units lie at residues 101–140, 143–182, 185–224, 299–341, and 345–382; these read GGKK…IRRK, GHVG…CAST, GHIG…IISN, SGEK…SPFC, and FTNS…DLDK.

The protein belongs to the WD repeat PAAF1/RPN14 family. In terms of assembly, interacts with proteasome 26S subunit ATPases.

Its function is as follows. Inhibits proteasome 26S assembly and activity by impairing the association of the 19S regulatory complex with the 20S core. In Dictyostelium discoideum (Social amoeba), this protein is Probable proteasomal ATPase-associated factor 1 (paaf1).